Consider the following 278-residue polypeptide: MTIYNQSLSSKEYISHHLKNLQIDLRTFKIVQENDSSSFWFLNIDSLFFSFFLGIIFLLFFNYISKKFTIGTPGRIQASIEILVEFINSNVKDIFGHNTNKIIPPLSLTIFVWLFLMNLMDLIPVDFVPYIANFIFNISELRIVPSSDINITLSMSLGVFLLILYFGIKNKGIVVFLKEFFFQPFNNYLLIPVNLVLELISLLSKPVSLSLRLFGNIYSGELIFILISGLLPWWLQWILSVPWAIFHILIIILQAFIFMILTIIYLEMSLEKPDKNTI.

6 helical membrane-spanning segments follow: residues 41–61, 108–128, 149–168, 180–200, 222–242, and 244–264; these read FLNIDSLFFSFFLGIIFLLFF, LTIFVWLFLMNLMDLIPVDFV, INITLSMSLGVFLLILYFGI, FFFQPFNNYLLIPVNLVLELI, LIFILISGLLPWWLQWILSVP, and AIFHILIIILQAFIFMILTII.

It belongs to the ATPase A chain family. As to quaternary structure, F-type ATPases have 2 components, CF(1) - the catalytic core - and CF(0) - the membrane proton channel. CF(1) has five subunits: alpha(3), beta(3), gamma(1), delta(1), epsilon(1). CF(0) has three main subunits: a(1), b(2) and c(9-12). The alpha and beta chains form an alternating ring which encloses part of the gamma chain. CF(1) is attached to CF(0) by a central stalk formed by the gamma and epsilon chains, while a peripheral stalk is formed by the delta and b chains.

The protein resides in the cell membrane. Key component of the proton channel; it plays a direct role in the translocation of protons across the membrane. The polypeptide is ATP synthase subunit a (Wigglesworthia glossinidia brevipalpis).